Consider the following 501-residue polypeptide: Carboxypeptidase 1 (501 aa).

Residues 3 to 496 (IHTYEKEFFD…LIDYLSNKYS (494 aa)) form the Peptidase M32 domain. Residues 234 to 236 (HPF) carry the HPF motif. Positions 244–248 (DVRVT) match the DXRXT motif. Residue His265 coordinates Zn(2+). The HEXXH signature appears at 265–269 (HECGH). The active-site Proton donor/acceptor is Glu266. His269 and Glu295 together coordinate Zn(2+). The HES/GQ signature appears at 294–297 (HESQ). Positions 347–352 (IRVEAD) match the I/NRXXA/SD motif. The GXXQDXHW signature appears at 402–409 (GILQDVHW).

The protein belongs to the peptidase M32 family. In terms of assembly, homodimer. It depends on Zn(2+) as a cofactor.

The catalysed reaction is Release of a C-terminal amino acid with broad specificity, except for -Pro.. Functionally, broad specificity carboxypetidase that releases amino acids sequentially from the C-terminus, including neutral, aromatic, polar and basic residues. Has lower activity with substrates ending with His or Trp. The polypeptide is Carboxypeptidase 1 (ypwA) (Bacillus subtilis (strain 168)).